A 975-amino-acid polypeptide reads, in one-letter code: Macrophage colony-stimulating factor 1 receptor 1 (975 aa).

The signal sequence occupies residues 1–17 (MQSFLPLLMGIMASASS). Over 18–519 (VEWRHPVIWF…VEVSDKLFTS (502 aa)) the chain is Extracellular. Ig-like C2-type domains lie at 34-113 (SSEV…VYVK), 125-208 (SLRV…INVI), 221-310 (MDEY…LLVV), 329-407 (GLSV…FHVK), and 404-513 (FHVK…VEVS). Disulfide bonds link Cys49–Cys93, Cys140–Cys189, and Cys236–Cys292. Residues Asn156, Asn165, Asn246, Asn250, Asn289, Asn301, Asn399, Asn420, and Asn451 are each glycosylated (N-linked (GlcNAc...) asparagine). Cys426 and Cys495 are disulfide-bonded. Residues 520 to 540 (TLIGAAGVLAIFLLLLVFLLY) traverse the membrane as a helical segment. Residues 541-975 (KYKQKPRFEI…LMKTNNYQFC (435 aa)) lie on the Cytoplasmic side of the membrane. The interval 544–576 (QKPRFEIRWKIIEAREGNNYTFIDPTQLPYNEK) is regulatory juxtamembrane domain. Tyr563 bears the Phosphotyrosine; by autocatalysis mark. The region spanning 584 to 918 (LKLGKVLGAG…MISQMINRLL (335 aa)) is the Protein kinase domain. Residues 590 to 598 (LGAGAFGKV) and Lys619 contribute to the ATP site. Phosphotyrosine; by autocatalysis is present on residues Tyr702 and Tyr726. Residue Asp782 is the Proton acceptor of the active site. The tract at residues 800 to 822 (DFGLARDIMNDSNYVVKGNARLP) is activation loop. Tyr813 and Tyr929 each carry phosphotyrosine; by autocatalysis. The interval 939-963 (EGEACDEPKRYDPPCERSCDHEEEE) is disordered. A compositionally biased stretch (basic and acidic residues) spans 944–958 (DEPKRYDPPCERSCD). At Tyr972 the chain carries Phosphotyrosine; by autocatalysis.

The protein belongs to the protein kinase superfamily. Tyr protein kinase family. CSF-1/PDGF receptor subfamily. As to quaternary structure, monomer. Homodimer. Interacts with CSF1. In terms of processing, autophosphorylated in response to CSF1 binding. autophosphorylation, leading to its degradation. Post-translationally, ubiquitinated. Becomes rapidly polyubiquitinated after autophosphorylation, leading to its degradation.

The protein localises to the cell membrane. It catalyses the reaction L-tyrosyl-[protein] + ATP = O-phospho-L-tyrosyl-[protein] + ADP + H(+). Present in an inactive conformation in the absence of bound ligand. CSF1 binding leads to dimerization and activation by autophosphorylation on tyrosine residues. Its function is as follows. Tyrosine-protein kinase that acts as a cell-surface receptor for CSF1 and plays an essential role in the regulation of survival, proliferation and differentiation of hematopoietic precursor cells, especially mononuclear phagocytes, such as macrophages and monocytes. Plays an important role in innate immunity and in inflammatory processes. Plays an important role in the regulation of osteoclast proliferation and differentiation, the regulation of bone resorption, and is required for normal bone development. Promotes reorganization of the actin cytoskeleton, regulates formation of membrane ruffles, cell adhesion and cell migration. Activates several signaling pathways in response to ligand binding. The polypeptide is Macrophage colony-stimulating factor 1 receptor 1 (csf1r1) (Takifugu rubripes (Japanese pufferfish)).